The chain runs to 639 residues: Threonine--tRNA ligase (639 aa).

A TGS domain is found at 1–61; sequence MIHITLPDGS…TQDSPLSIVT (61 aa). The catalytic stretch occupies residues 242–533; that stretch reads DHRKLGRELD…LIEEHAGALP (292 aa). The Zn(2+) site is built by cysteine 333, histidine 384, and histidine 510.

The protein belongs to the class-II aminoacyl-tRNA synthetase family. In terms of assembly, homodimer. Zn(2+) serves as cofactor.

It is found in the cytoplasm. The catalysed reaction is tRNA(Thr) + L-threonine + ATP = L-threonyl-tRNA(Thr) + AMP + diphosphate + H(+). Its function is as follows. Catalyzes the attachment of threonine to tRNA(Thr) in a two-step reaction: L-threonine is first activated by ATP to form Thr-AMP and then transferred to the acceptor end of tRNA(Thr). Also edits incorrectly charged L-seryl-tRNA(Thr). The sequence is that of Threonine--tRNA ligase from Acidovorax ebreus (strain TPSY) (Diaphorobacter sp. (strain TPSY)).